Consider the following 57-residue polypeptide: Small hydrophobic protein (57 aa).

Topologically, residues 1–8 (MPAIQPPL) are virion surface. Residues 9-29 (YPTFLLLILLSLIVTLYVWII) traverse the membrane as a helical segment. Residues 30–57 (STITYKTVVRHAALYQRSFFRWSFDHSL) are Intravirion-facing.

Belongs to the rubulavirus small hydrophobic protein family. In terms of assembly, interacts with host TNFRSF1A, RIPK1 and IRAK1; these interactions interfere with host NF-kappa-B activation at the level of receptor complexes. Interacts with host protein UBQLN4.

Its subcellular location is the virion membrane. It localises to the host cell membrane. Functionally, plays a role in the inhibition of the host NF-kappa-B pathway. This inhibition occurs at the receptor level, by preventing the signaling of TNFR1 as well as IL-1R and TLR3. The chain is Small hydrophobic protein (SH) from Mumps virus genotype B (strain Urabe vaccine AM9) (MuV).